Here is a 132-residue protein sequence, read N- to C-terminus: Fatty acid-binding protein type 2 (132 aa).

At Ala-2 the chain carries N-acetylalanine.

This sequence belongs to the calycin superfamily. Fatty-acid binding protein (FABP) family.

The chain is Fatty acid-binding protein type 2 from Fasciola hepatica (Liver fluke).